A 539-amino-acid chain; its full sequence is Probable K(+)/H(+) antiporter subunit D (539 aa).

14 helical membrane passes run 4 to 23 (WLDH…AAVL), 36 to 58 (AIGF…LAAA), 78 to 100 (FGIV…GLAL), 113 to 135 (AGHH…FLTG), 140 to 162 (LFVF…SGPL), 175 to 197 (LAAS…TLNM), 217 to 239 (MGSA…SFWL), 251 to 273 (AGVF…LLVF), 283 to 305 (FGQE…GVLA), 312 to 331 (LAGY…VGLG), 335 to 357 (MLAG…FLLI), 400 to 422 (VLGL…SGFI), 442 to 464 (AMSA…AMIA), and 484 to 506 (VVVI…SLQA).

Belongs to the CPA3 antiporters (TC 2.A.63) subunit D family. In terms of assembly, may form a hetero-oligomeric complex that consists of six subunits: PhaAB, PhaC, PhaD, PhaE, PhaF and PhaG.

The protein resides in the cell membrane. Its function is as follows. Part of a K(+) efflux system which is required for the adaptation of R.meliloti to alkaline pH as well as for the infection process during symbiotic nodule development. The chain is Probable K(+)/H(+) antiporter subunit D (phaD) from Rhizobium meliloti (strain 1021) (Ensifer meliloti).